Reading from the N-terminus, the 513-residue chain is ATP synthase subunit alpha 1 (513 aa).

169–176 contacts ATP; that stretch reads GDRQCGKT.

It belongs to the ATPase alpha/beta chains family. F-type ATPases have 2 components, CF(1) - the catalytic core - and CF(0) - the membrane proton channel. CF(1) has five subunits: alpha(3), beta(3), gamma(1), delta(1), epsilon(1). CF(0) has three main subunits: a(1), b(2) and c(9-12). The alpha and beta chains form an alternating ring which encloses part of the gamma chain. CF(1) is attached to CF(0) by a central stalk formed by the gamma and epsilon chains, while a peripheral stalk is formed by the delta and b chains.

It localises to the cell inner membrane. The catalysed reaction is ATP + H2O + 4 H(+)(in) = ADP + phosphate + 5 H(+)(out). Functionally, produces ATP from ADP in the presence of a proton gradient across the membrane. The alpha chain is a regulatory subunit. The protein is ATP synthase subunit alpha 1 of Burkholderia thailandensis (strain ATCC 700388 / DSM 13276 / CCUG 48851 / CIP 106301 / E264).